Reading from the N-terminus, the 294-residue chain is tRNA-uridine aminocarboxypropyltransferase 1 (294 aa).

The segment at 158–185 (DMQNDSSCEPSLKRPKCSQQYDKSKNEG) is disordered. The short motif at 202 to 205 (DSTW) is the DXTW element.

This sequence belongs to the TDD superfamily. DTWD1 family.

Its subcellular location is the nucleus. The enzyme catalyses a uridine in tRNA + S-adenosyl-L-methionine = a 3-[(3S)-3-amino-3-carboxypropyl]uridine in tRNA + S-methyl-5'-thioadenosine + H(+). Its function is as follows. Catalyzes the formation of 3-(3-amino-3-carboxypropyl)uridine (acp3U) at position 20 in the D-loop of several cytoplasmic tRNAs (acp3U(20)). This Xenopus tropicalis (Western clawed frog) protein is tRNA-uridine aminocarboxypropyltransferase 1.